Reading from the N-terminus, the 3942-residue chain is Protein bassoon (3942 aa).

The disordered stretch occupies residues 1 to 158 (MGNEASLEGG…PTSPYSVPQI (158 aa)). Gly-2 is lipidated: N-myristoyl glycine. Over residues 9–29 (GGAGEGPLPPGGSGLGPGPGA) the composition is skewed to gly residues. Positions 31–52 (KPPSALAGGGQLPVAGAARAAG) are enriched in low complexity. Residues 53–71 (PPTPGLGPVPGPGPGPGPG) are compositionally biased toward pro residues. The tract at residues 62–71 (PGPGPGPGPG) is 5 X 2 AA tandem repeats of P-G. Polar residues-rich tracts occupy residues 85 to 98 (SQRT…QASA) and 127 to 154 (QVDS…SPYS). Ser-142 bears the Phosphoserine mark. Arg-145 carries the omega-N-methylarginine modification. 2 consecutive C4-type zinc fingers follow at residues 167–190 (CPIC…CTQC) and 195–217 (CNQC…CLNC). Disordered stretches follow at residues 228–341 (TTAP…EQTQ) and 362–457 (LMSV…KTMP). Residues 230-240 (APRSKSQQQLH) show a composition bias toward polar residues. Phosphoserine occurs at positions 241 and 245. Residues 362–379 (LMSVQPEADTQGQPSPSK) show a composition bias toward polar residues. Over residues 395–407 (PRPPGSGPGPGPT) the composition is skewed to pro residues. 2 C4-type zinc fingers span residues 464–487 (CPLC…CTAC) and 492–514 (CNLC…CLNC). Disordered stretches follow at residues 525–937 (GEPA…LQGG), 950–1258 (GSYG…VAES), 1309–1553 (MDPM…WQQS), and 1573–1625 (RMVH…PSAG). Residues 528–541 (APLPLPTPQQPPAG) show a composition bias toward pro residues. 5 consecutive repeat copies span residues 570–576 (KASPQAT), 577–583 (KASPQAT), 584–590 (KASPQAT), 591–597 (KASPQTT), and 598–604 (KASPQAK). A 5 X 7 AA tandem repeats of K-A-S-P-Q-[AT]-[AT] region spans residues 570–604 (KASPQATKASPQATKASPQATKASPQTTKASPQAK). Residues 573 to 600 (PQATKASPQATKASPQATKASPQTTKAS) show a composition bias toward polar residues. Over residues 632 to 645 (VPKPPPETTVPPGT) the composition is skewed to pro residues. Positions 684–693 (QDLSRSPQSL) are enriched in polar residues. Over residues 694 to 708 (SDTGYSSDGVSSSQS) the composition is skewed to low complexity. Residues 709–718 (EITGVVQQEV) are compositionally biased toward polar residues. Acidic residues-rich tracts occupy residues 787–802 (FDSD…EDDS) and 865–876 (SAEEDNLEEDDT). The residue at position 881 (Arg-881) is an Omega-N-methylarginine. Residues 895 to 905 (PRPESSQEPKR) show a composition bias toward basic and acidic residues. Ser-980 carries the phosphoserine modification. Low complexity predominate over residues 994 to 1011 (PASTPSYTSGTSPTSLSS). The segment covering 1049 to 1062 (DSSEEEELREEEEL) has biased composition (acidic residues). Phosphoserine is present on residues Ser-1050 and Ser-1051. Residues 1063 to 1076 (LREQEKMREVEQQR) show a composition bias toward basic and acidic residues. The residue at position 1100 (Ser-1100) is a Phosphoserine. Thr-1102 is subject to Phosphothreonine. Ser-1108 and Ser-1114 each carry phosphoserine. Residues 1117-1132 (EELRQAAEMEELHRSS) show a composition bias toward basic and acidic residues. Composition is skewed to low complexity over residues 1133 to 1143 (CSEYSPSPSLD) and 1173 to 1190 (SPTE…SGRP). The segment covering 1192-1207 (KSAEEAYEDMMRKAEM) has biased composition (basic and acidic residues). The span at 1209–1219 (QRQQGQVAGAR) shows a compositional bias: low complexity. Residues 1226 to 1240 (SQPTGPRSQGSFEYQ) show a composition bias toward polar residues. Position 1236 is a phosphoserine (Ser-1236). Low complexity predominate over residues 1333 to 1343 (SFSTSTSSDSS). The O-linked (GlcNAc) threonine glycan is linked to Thr-1354. Over residues 1357–1366 (FAKEPQDPLK) the composition is skewed to basic and acidic residues. Over residues 1370-1438 (SPVSSTLTSK…TTANYGSQTE (69 aa)) the composition is skewed to polar residues. Residue Thr-1395 is glycosylated (O-linked (GlcNAc) threonine). 3 positions are modified to phosphoserine: Ser-1482, Ser-1491, and Ser-1493. Positions 1488-1498 (STPSESPTFSP) are enriched in low complexity. 2 stretches are compositionally biased toward polar residues: residues 1508 to 1522 (EFST…SSDI) and 1573 to 1609 (RMVH…SQMP). O-linked (GlcNAc) serine glycosylation occurs at Ser-1707. An omega-N-methylarginine mark is found at Arg-1792 and Arg-1796. Arg-1806 bears the Asymmetric dimethylarginine; alternate mark. At Arg-1806 the chain carries Omega-N-methylarginine; alternate. An Omega-N-methylarginine modification is found at Arg-1818. Disordered regions lie at residues 1831 to 1865 (GVGL…TRKP) and 1926 to 1977 (PSAP…QRPY). Residues 1844 to 1856 (AEPHRATPAELRS) are compositionally biased toward basic and acidic residues. O-linked (GlcNAc) threonine glycosylation occurs at Thr-1934. 2 positions are modified to phosphoserine: Ser-1990 and Ser-2046. Arg-2051 and Arg-2081 each carry omega-N-methylarginine. Arg-2255, Arg-2265, and Arg-2270 each carry asymmetric dimethylarginine. Thr-2318 is a glycosylation site (O-linked (GlcNAc) threonine). Disordered regions lie at residues 2327–2378 (PVAP…KQQE), 2476–2504 (EQKQ…TELA), and 2524–2663 (TEGP…STTA). Residues 2329 to 2342 (APAPGPAPAPPPGQ) show a composition bias toward pro residues. A compositionally biased stretch (basic and acidic residues) spans 2361 to 2378 (ASEKEEASQEDRQRKQQE). 2 coiled-coil regions span residues 2366-2422 (EASQ…LVQR) and 2453-2483 (LAQQ…RQKA). O-linked (GlcNAc) threonine glycosylation is present at Thr-2524. A compositionally biased stretch (polar residues) spans 2541 to 2551 (SSASDMSLQTE). Residue Ser-2578 is modified to Phosphoserine. A phosphothreonine mark is found at Thr-2595 and Thr-2622. Positions 2643–2655 (RHSDSGSDSKHDA) are enriched in basic and acidic residues. Thr-2700 is a glycosylation site (O-linked (GlcNAc) threonine). The interaction with DAO stretch occupies residues 2730–3278 (EPDGQAQGVA…GGVSGRPGKD (549 aa)). Ser-2811, Ser-2860, and Ser-2866 each carry phosphoserine. The interval 2854 to 2874 (TLQRSLSDPKPLSPTAEESAK) is disordered. Thr-2945 carries O-linked (GlcNAc) threonine glycosylation. Residue Ser-3022 is modified to Phosphoserine. Disordered regions lie at residues 3051–3409 (PATP…LTSR), 3431–3560 (YYGV…PRAH), and 3581–3917 (EAYH…KILP). Residues 3073–3083 (TAGSSGPTQNG) show a composition bias toward polar residues. Residues 3089-3114 (APTYTGPSTYPAPTYPPGTGYPAEPG) show a composition bias toward low complexity. Positions 3202–3211 (KAPEHPRGSD) are enriched in basic and acidic residues. A compositionally biased stretch (polar residues) spans 3212–3237 (RSSVSQSPAPTYPSDSHYTSLEQNVP). Ser-3301 is subject to Phosphoserine. 2 stretches are compositionally biased toward basic and acidic residues: residues 3330–3342 (GDSD…RADK) and 3372–3391 (QGME…KDVE). At Ser-3382 the chain carries Phosphoserine. The span at 3447 to 3461 (YGSSSRSRMASAYSG) shows a compositional bias: low complexity. A compositionally biased stretch (basic and acidic residues) spans 3464 to 3487 (LSSHDYSSRGKGYERERDTAERLQ). At Arg-3502 the chain carries Omega-N-methylarginine. Low complexity predominate over residues 3520–3534 (PLGRPRPAGGALPPG). Composition is skewed to basic and acidic residues over residues 3549–3560 (VQEHVKDGPRAH) and 3592–3602 (WFDKPRDARSD). Over residues 3652–3665 (EHRHHSDHGRHSGR) the composition is skewed to basic residues. The span at 3666-3690 (HAGEEPGRRAAKPHARDMGRHEARP) shows a compositional bias: basic and acidic residues. The segment covering 3750–3820 (TQAQPQMQGR…QARLQPQSQP (71 aa)) has biased composition (low complexity). Omega-N-methylarginine is present on Arg-3823. The segment covering 3835-3851 (KPQPGPTTAPGPQPAGP) has biased composition (pro residues). Residues 3856–3891 (QASSSKPPAAKAPQQGRAPQAQTTPGPGPAGAKPGA) are compositionally biased toward low complexity.

In terms of assembly, interacts with PCLO, ERC2/CAST1, RIMS1 and UNC13A. Interacts with TPRG1L. Interacts with DYNLL1 and DYNLL2; these interactions potentially link PTVs to dynein and myosin V motor complexes. Interacts with ATG5; this interaction is important for the regulation of presynaptic autophagy. Interacts (via C-terminus) with TRIO (via N-terminus). Interacts with CTBP1. Interacts with SIAH1; this interaction negatively regulates SIAH1 E3 ligase activity. Interacts (via coiled region) with DAO; the interaction is direct. In terms of processing, myristoylated. The N-terminal myristoylation is not sufficient for presynaptic localization. Expressed in brain and retina.

It is found in the cytoplasm. The protein resides in the presynaptic active zone. It localises to the cytoskeleton. The protein localises to the cytoplasmic vesicle. Its subcellular location is the secretory vesicle. It is found in the synaptic vesicle membrane. Its function is as follows. Scaffold protein of the presynaptic cytomatrix at the active zone (CAZ) which is the place in the synapse where neurotransmitter is released. After synthesis, participates in the formation of Golgi-derived membranous organelles termed Piccolo-Bassoon transport vesicles (PTVs) that are transported along axons to sites of nascent synaptic contacts. At the presynaptic active zone, regulates the spatial organization of synaptic vesicle cluster, the protein complexes that execute membrane fusion and compensatory endocytosis. Also functions in processes other than assembly such as the regulation of specific presynaptic protein ubiquitination by interacting with SIAH1 or the regulation of presynaptic autophagy by associating with ATG5. Also mediates synapse to nucleus communication leading to reconfiguration of gene expression by associating with the transcriptional corepressor CTBP1 and by subsequently reducing the size of its pool available for nuclear import. Inhibits the activity of the proportion of DAO enzyme that localizes to the presynaptic active zone, which may modulate synaptic transmission. This Mus musculus (Mouse) protein is Protein bassoon.